We begin with the raw amino-acid sequence, 904 residues long: Protein translocase subunit SecA (904 aa).

ATP-binding positions include Gln87, 105-109, and Asp507; that span reads GEGKT. The interval 865–887 is disordered; the sequence is GEGAEAAGQQPADAGPKIGRNDP. Low complexity predominate over residues 868-880; that stretch reads AEAAGQQPADAGP. 4 residues coordinate Zn(2+): Cys888, Cys890, Cys899, and His900.

It belongs to the SecA family. Monomer and homodimer. Part of the essential Sec protein translocation apparatus which comprises SecA, SecYEG and auxiliary proteins SecDF-YajC and YidC. The cofactor is Zn(2+).

The protein localises to the cell inner membrane. It localises to the cytoplasm. It catalyses the reaction ATP + H2O + cellular proteinSide 1 = ADP + phosphate + cellular proteinSide 2.. In terms of biological role, part of the Sec protein translocase complex. Interacts with the SecYEG preprotein conducting channel. Has a central role in coupling the hydrolysis of ATP to the transfer of proteins into and across the cell membrane, serving both as a receptor for the preprotein-SecB complex and as an ATP-driven molecular motor driving the stepwise translocation of polypeptide chains across the membrane. The polypeptide is Protein translocase subunit SecA (Dechloromonas aromatica (strain RCB)).